The chain runs to 153 residues: Large ribosomal subunit protein uL23m (153 aa).

Positions 110-153 (IFPEKDKKSKEGSVEEMHEKFMEDERQRQKPDPRRGGVTEWFGL) are disordered. The segment covering 111–146 (FPEKDKKSKEGSVEEMHEKFMEDERQRQKPDPRRGG) has biased composition (basic and acidic residues).

It belongs to the universal ribosomal protein uL23 family. Component of the mitochondrial ribosome large subunit (39S) which comprises a 16S rRNA and about 50 distinct proteins.

Its subcellular location is the mitochondrion. In Danio rerio (Zebrafish), this protein is Large ribosomal subunit protein uL23m (mrpl23).